A 495-amino-acid chain; its full sequence is Cobyric acid synthase (495 aa).

The 194-residue stretch at 253–446 (KISIAIVYFP…FHGIFDGSAF (194 aa)) folds into the GATase cobBQ-type domain. The Nucleophile role is filled by Cys334. The active site involves His438.

It belongs to the CobB/CobQ family. CobQ subfamily.

Its pathway is cofactor biosynthesis; adenosylcobalamin biosynthesis. Functionally, catalyzes amidations at positions B, D, E, and G on adenosylcobyrinic A,C-diamide. NH(2) groups are provided by glutamine, and one molecule of ATP is hydrogenolyzed for each amidation. The chain is Cobyric acid synthase from Chlorobium phaeobacteroides (strain BS1).